Consider the following 199-residue polypeptide: Recombination protein RecR (199 aa).

The C4-type zinc finger occupies Cys-58–Cys-73. The 95-residue stretch at Lys-81–Pro-175 folds into the Toprim domain.

Belongs to the RecR family.

In terms of biological role, may play a role in DNA repair. It seems to be involved in an RecBC-independent recombinational process of DNA repair. It may act with RecF and RecO. The chain is Recombination protein RecR from Prochlorococcus marinus subsp. pastoris (strain CCMP1986 / NIES-2087 / MED4).